Here is an 81-residue protein sequence, read N- to C-terminus: MAELNKAIDKLTYKLAMNYPYTADIAEKLIELGLIRQEKWLKAINDTKRFKDKILDKRNSNNKIEKSENTGENHDNNQDQK.

The tract at residues 55–81 (LDKRNSNNKIEKSENTGENHDNNQDQK) is disordered.

This is an uncharacterized protein from Thermoproteus tenax virus 1 (strain KRA1) (TTV1).